The sequence spans 542 residues: MNGKRPAEPGSDRAGKKVKKEVMAKFSDAVTEETLKKQVAEAWSRRTPFRHEAIVMDMDPFLHCVIPNFIQSQNFLEGLQKELLNLDFHEKYNDLYKFQQSDDLKKRREPHICALRKILFEHFRSWISDISKIDLESTIDMSCAKYEFSDALLCHDDELEGRRIAFILYLVPPWDASLGGTLDLFSVDEHFQPKQIVKSLIPSWNTLVFFEVSPVSFHQVSEVLSEEKSRLSISGWFHGPSLTRPPTYFEPLIARSPHIPQDHEILYDWINPTYLDMEYQAQIQEEFEESSEILLKEFLQPEKFAEVCEALERGRVEWSSRGPPNKRFYEKAEESQLPDILRDCMALFRSEAMFLLLSNFTGLKLHFLAPSEDEPEDKKERDAVSAAENTEEGTSHSSSEPENSWAATSDSSLQSEGPTDPEEDEAKKESSVPTCQGELRHWKTGHYTLIHDNSKTEFALDLLLYCGCEGWEPEYGGFTSYIAKGEDEELLTVNPENNSLALVYRDRETLKFVKHINHRSLEQKKSFPNRTGFWDFSFVYYE.

The Fe2OG dioxygenase domain maps to 134-239; sequence DLESTIDMSC…RLSISGWFHG (106 aa). Fe cation-binding residues include His155 and Asp157. Tyr169 is a 2-oxoglutarate binding site. His218 contributes to the Fe cation binding site. Residue Arg230 coordinates 2-oxoglutarate. The tract at residues 371-435 is disordered; that stretch reads SEDEPEDKKE…AKKESSVPTC (65 aa). The segment covering 395–417 has biased composition (polar residues); that stretch reads SHSSSEPENSWAATSDSSLQSEG.

It belongs to the TPA1 family. As to quaternary structure, monomer. Fe(2+) serves as cofactor. L-ascorbate is required as a cofactor.

The protein resides in the cytoplasm. Its subcellular location is the nucleus. It carries out the reaction [ribosomal protein uS12]-L-proline + 2-oxoglutarate + O2 = [ribosomal protein uS12]-(3S)-3-hydroxy-L-proline + succinate + CO2. In terms of biological role, prolyl 3-hydroxylase that catalyzes 3-hydroxylation of 'Pro-62' of small ribosomal subunit uS12 (RPS23), thereby regulating protein translation termination efficiency. Involved in stress granule formation. The protein is Prolyl 3-hydroxylase OGFOD1 (OGFOD1) of Bos taurus (Bovine).